Reading from the N-terminus, the 251-residue chain is uncharacterized protein (251 aa).

This is an uncharacterized protein from Mycoplasma pneumoniae (strain ATCC 29342 / M129 / Subtype 1) (Mycoplasmoides pneumoniae).